Reading from the N-terminus, the 237-residue chain is Phosphatidylserine decarboxylase proenzyme (237 aa).

Residue Ser206 is the Schiff-base intermediate with substrate; via pyruvic acid of the active site. Residue Ser206 is modified to Pyruvic acid (Ser); by autocatalysis.

It belongs to the phosphatidylserine decarboxylase family. PSD-A subfamily. In terms of assembly, heterodimer of a large membrane-associated beta subunit and a small pyruvoyl-containing alpha subunit. Requires pyruvate as cofactor. Is synthesized initially as an inactive proenzyme. Formation of the active enzyme involves a self-maturation process in which the active site pyruvoyl group is generated from an internal serine residue via an autocatalytic post-translational modification. Two non-identical subunits are generated from the proenzyme in this reaction, and the pyruvate is formed at the N-terminus of the alpha chain, which is derived from the carboxyl end of the proenzyme. The post-translation cleavage follows an unusual pathway, termed non-hydrolytic serinolysis, in which the side chain hydroxyl group of the serine supplies its oxygen atom to form the C-terminus of the beta chain, while the remainder of the serine residue undergoes an oxidative deamination to produce ammonia and the pyruvoyl prosthetic group on the alpha chain.

The protein localises to the cell membrane. It carries out the reaction a 1,2-diacyl-sn-glycero-3-phospho-L-serine + H(+) = a 1,2-diacyl-sn-glycero-3-phosphoethanolamine + CO2. It functions in the pathway phospholipid metabolism; phosphatidylethanolamine biosynthesis; phosphatidylethanolamine from CDP-diacylglycerol: step 2/2. In terms of biological role, catalyzes the formation of phosphatidylethanolamine (PtdEtn) from phosphatidylserine (PtdSer). This Nocardia farcinica (strain IFM 10152) protein is Phosphatidylserine decarboxylase proenzyme.